The sequence spans 255 residues: Geranylgeranylglyceryl phosphate synthase (255 aa).

Mg(2+)-binding residues include aspartate 34 and threonine 64. Residues tyrosine 182–glycine 188, glycine 213–glycine 214, and glycine 235–asparagine 236 contribute to the sn-glycerol 1-phosphate site.

This sequence belongs to the GGGP/HepGP synthase family. Group II subfamily. Mg(2+) serves as cofactor.

It is found in the cytoplasm. The catalysed reaction is sn-glycerol 1-phosphate + (2E,6E,10E)-geranylgeranyl diphosphate = sn-3-O-(geranylgeranyl)glycerol 1-phosphate + diphosphate. The protein operates within membrane lipid metabolism; glycerophospholipid metabolism. In terms of biological role, prenyltransferase that catalyzes the transfer of the geranylgeranyl moiety of geranylgeranyl diphosphate (GGPP) to the C3 hydroxyl of sn-glycerol-1-phosphate (G1P). This reaction is the first ether-bond-formation step in the biosynthesis of archaeal membrane lipids. In Saccharolobus islandicus (strain M.14.25 / Kamchatka #1) (Sulfolobus islandicus), this protein is Geranylgeranylglyceryl phosphate synthase.